The chain runs to 249 residues: DNA repair protein RecO (249 aa).

Belongs to the RecO family.

Functionally, involved in DNA repair and RecF pathway recombination. The sequence is that of DNA repair protein RecO from Exiguobacterium sibiricum (strain DSM 17290 / CCUG 55495 / CIP 109462 / JCM 13490 / 255-15).